A 311-amino-acid chain; its full sequence is Heparan sulfate glucosamine 3-O-sulfotransferase 1 (311 aa).

The N-terminal stretch at 1-20 (MTLLLLGAVLLVAQPQLVPS) is a signal peptide. Residue asparagine 52 is glycosylated (N-linked (GlcNAc...) asparagine). Residues 68–72 (KGGTR), arginine 151, and serine 159 each bind 3'-phosphoadenylyl sulfate. N-linked (GlcNAc...) asparagine glycosylation is found at asparagine 196, asparagine 246, and asparagine 253. Tyrosine 259 provides a ligand contact to 3'-phosphoadenylyl sulfate. Cysteine 260 and cysteine 269 are joined by a disulfide. A 3'-phosphoadenylyl sulfate-binding site is contributed by 274–278 (KGRAH).

The protein belongs to the sulfotransferase 1 family.

The protein resides in the golgi apparatus lumen. It catalyses the reaction alpha-D-glucosaminyl-[heparan sulfate](n) + 3'-phosphoadenylyl sulfate = 3-sulfo-alpha-D-glucosaminyl-[heparan sulfate](n) + adenosine 3',5'-bisphosphate + H(+). Functionally, sulfotransferase that utilizes 3'-phospho-5'-adenylyl sulfate (PAPS) to catalyze the transfer of a sulfo group to position 3 of glucosamine residues in heparan. Catalyzes the rate limiting step in the biosynthesis of heparan sulfate (HSact). This modification is a crucial step in the biosynthesis of anticoagulant heparan sulfate as it completes the structure of the antithrombin pentasaccharide binding site. This is Heparan sulfate glucosamine 3-O-sulfotransferase 1 (Hs3st1) from Rattus norvegicus (Rat).